The primary structure comprises 331 residues: Ketol-acid reductoisomerase (NADP(+)) (331 aa).

Residues A2–T182 enclose the KARI N-terminal Rossmann domain. NADP(+)-binding positions include Y25–Q28, S51, S53, and D83–Q86. Residue H108 is part of the active site. G134 lines the NADP(+) pocket. One can recognise a KARI C-terminal knotted domain in the interval N183–L328. The Mg(2+) site is built by D191, E195, E227, and E231. Residue S252 coordinates substrate.

This sequence belongs to the ketol-acid reductoisomerase family. Requires Mg(2+) as cofactor.

The enzyme catalyses (2R)-2,3-dihydroxy-3-methylbutanoate + NADP(+) = (2S)-2-acetolactate + NADPH + H(+). The catalysed reaction is (2R,3R)-2,3-dihydroxy-3-methylpentanoate + NADP(+) = (S)-2-ethyl-2-hydroxy-3-oxobutanoate + NADPH + H(+). Its pathway is amino-acid biosynthesis; L-isoleucine biosynthesis; L-isoleucine from 2-oxobutanoate: step 2/4. It participates in amino-acid biosynthesis; L-valine biosynthesis; L-valine from pyruvate: step 2/4. In terms of biological role, involved in the biosynthesis of branched-chain amino acids (BCAA). Catalyzes an alkyl-migration followed by a ketol-acid reduction of (S)-2-acetolactate (S2AL) to yield (R)-2,3-dihydroxy-isovalerate. In the isomerase reaction, S2AL is rearranged via a Mg-dependent methyl migration to produce 3-hydroxy-3-methyl-2-ketobutyrate (HMKB). In the reductase reaction, this 2-ketoacid undergoes a metal-dependent reduction by NADPH to yield (R)-2,3-dihydroxy-isovalerate. The sequence is that of Ketol-acid reductoisomerase (NADP(+)) from Parasynechococcus marenigrum (strain WH8102).